We begin with the raw amino-acid sequence, 510 residues long: Cytochrome P450 52C2 (510 aa).

C458 is a binding site for heme.

The protein belongs to the cytochrome P450 family. Requires heme as cofactor.

It localises to the membrane. Together with an NADPH cytochrome P450 the enzyme system catalyzes the terminal hydroxylation as the first step in the assimilation of alkanes and fatty acids. The chain is Cytochrome P450 52C2 (CYP52C2) from Candida maltosa (Yeast).